A 614-amino-acid polypeptide reads, in one-letter code: V-type proton ATPase catalytic subunit A (614 aa).

247-254 (GAFGCGKT) lines the ATP pocket.

The protein belongs to the ATPase alpha/beta chains family. As to quaternary structure, V-ATPase is a heteromultimeric enzyme made up of two complexes: the ATP-hydrolytic V1 complex and the proton translocation V0 complex. The V1 complex consists of three catalytic AB heterodimers that form a heterohexamer, three peripheral stalks each consisting of EG heterodimers, one central rotor including subunits D and F, and the regulatory subunits C and H. The proton translocation complex V0 consists of the proton transport subunit a, a ring of proteolipid subunits c9c'', rotary subunit d, subunits e and f, and the accessory subunits VhaAC45 and ATP6AP2.

The catalysed reaction is ATP + H2O + 4 H(+)(in) = ADP + phosphate + 5 H(+)(out). Its activity is regulated as follows. ATP hydrolysis occurs at the interface between the nucleotide-binding domains of subunits A and B. ATP hydrolysis triggers a conformational change in the subunits D and F, which induces a shift of subunit d. The c-ring is subsequently rotated and results in a continuous proton translocation across the membrane. Its function is as follows. Catalytic subunit of the V1 complex of vacuolar(H+)-ATPase (V-ATPase), a multisubunit enzyme composed of a peripheral complex (V1) that hydrolyzes ATP and a membrane integral complex (V0) that translocates protons. V-ATPase is responsible for acidifying and maintaining the pH of intracellular compartments and in some cell types, is targeted to the plasma membrane, where it is responsible for acidifying the extracellular environment. In Aedes aegypti (Yellowfever mosquito), this protein is V-type proton ATPase catalytic subunit A (VhaA).